The sequence spans 392 residues: Probable tRNA sulfurtransferase (392 aa).

The region spanning Ala59–Ile167 is the THUMP domain. ATP-binding positions include Leu184–Leu185, His209–Phe210, Arg266, Gly288, and Gln297.

The protein belongs to the ThiI family.

It is found in the cytoplasm. The catalysed reaction is [ThiI sulfur-carrier protein]-S-sulfanyl-L-cysteine + a uridine in tRNA + 2 reduced [2Fe-2S]-[ferredoxin] + ATP + H(+) = [ThiI sulfur-carrier protein]-L-cysteine + a 4-thiouridine in tRNA + 2 oxidized [2Fe-2S]-[ferredoxin] + AMP + diphosphate. It carries out the reaction [ThiS sulfur-carrier protein]-C-terminal Gly-Gly-AMP + S-sulfanyl-L-cysteinyl-[cysteine desulfurase] + AH2 = [ThiS sulfur-carrier protein]-C-terminal-Gly-aminoethanethioate + L-cysteinyl-[cysteine desulfurase] + A + AMP + 2 H(+). The protein operates within cofactor biosynthesis; thiamine diphosphate biosynthesis. Functionally, catalyzes the ATP-dependent transfer of a sulfur to tRNA to produce 4-thiouridine in position 8 of tRNAs, which functions as a near-UV photosensor. Also catalyzes the transfer of sulfur to the sulfur carrier protein ThiS, forming ThiS-thiocarboxylate. This is a step in the synthesis of thiazole, in the thiamine biosynthesis pathway. The sulfur is donated as persulfide by IscS. This Alkaliphilus oremlandii (strain OhILAs) (Clostridium oremlandii (strain OhILAs)) protein is Probable tRNA sulfurtransferase.